The sequence spans 684 residues: DNA-directed RNA polymerase subunit beta' (684 aa).

Residues C69, C71, C87, and C90 each contribute to the Zn(2+) site. Mg(2+) is bound by residues D489, D491, and D493.

The protein belongs to the RNA polymerase beta' chain family. RpoC1 subfamily. As to quaternary structure, in plastids the minimal PEP RNA polymerase catalytic core is composed of four subunits: alpha, beta, beta', and beta''. When a (nuclear-encoded) sigma factor is associated with the core the holoenzyme is formed, which can initiate transcription. Mg(2+) serves as cofactor. Requires Zn(2+) as cofactor.

The protein resides in the plastid. It localises to the chloroplast. The enzyme catalyses RNA(n) + a ribonucleoside 5'-triphosphate = RNA(n+1) + diphosphate. Functionally, DNA-dependent RNA polymerase catalyzes the transcription of DNA into RNA using the four ribonucleoside triphosphates as substrates. The chain is DNA-directed RNA polymerase subunit beta' from Marchantia polymorpha (Common liverwort).